Consider the following 429-residue polypeptide: Enolase (429 aa).

Q162 contributes to the (2R)-2-phosphoglycerate binding site. E204 acts as the Proton donor in catalysis. Positions 241, 282, and 309 each coordinate Mg(2+). 4 residues coordinate (2R)-2-phosphoglycerate: K334, R363, S364, and K385. The active-site Proton acceptor is the K334.

This sequence belongs to the enolase family. Mg(2+) serves as cofactor.

It is found in the cytoplasm. The protein resides in the secreted. It localises to the cell surface. It catalyses the reaction (2R)-2-phosphoglycerate = phosphoenolpyruvate + H2O. It participates in carbohydrate degradation; glycolysis; pyruvate from D-glyceraldehyde 3-phosphate: step 4/5. Its function is as follows. Catalyzes the reversible conversion of 2-phosphoglycerate (2-PG) into phosphoenolpyruvate (PEP). It is essential for the degradation of carbohydrates via glycolysis. The polypeptide is Enolase (Acidothermus cellulolyticus (strain ATCC 43068 / DSM 8971 / 11B)).